We begin with the raw amino-acid sequence, 276 residues long: Formamidopyrimidine-DNA glycosylase (276 aa).

Catalysis depends on P2, which acts as the Schiff-base intermediate with DNA. E3 functions as the Proton donor in the catalytic mechanism. K58 acts as the Proton donor; for beta-elimination activity in catalysis. 3 residues coordinate DNA: H94, R112, and R157. The FPG-type zinc-finger motif lies at 242–276 (FVYDRAGEPCRVCGAPIRQIVQGQRSTYYCPNCQR). R266 serves as the catalytic Proton donor; for delta-elimination activity.

Belongs to the FPG family. Monomer. Zn(2+) is required as a cofactor.

It carries out the reaction Hydrolysis of DNA containing ring-opened 7-methylguanine residues, releasing 2,6-diamino-4-hydroxy-5-(N-methyl)formamidopyrimidine.. The catalysed reaction is 2'-deoxyribonucleotide-(2'-deoxyribose 5'-phosphate)-2'-deoxyribonucleotide-DNA = a 3'-end 2'-deoxyribonucleotide-(2,3-dehydro-2,3-deoxyribose 5'-phosphate)-DNA + a 5'-end 5'-phospho-2'-deoxyribonucleoside-DNA + H(+). Involved in base excision repair of DNA damaged by oxidation or by mutagenic agents. Acts as a DNA glycosylase that recognizes and removes damaged bases. Has a preference for oxidized purines, such as 7,8-dihydro-8-oxoguanine (8-oxoG). Has AP (apurinic/apyrimidinic) lyase activity and introduces nicks in the DNA strand. Cleaves the DNA backbone by beta-delta elimination to generate a single-strand break at the site of the removed base with both 3'- and 5'-phosphates. This Burkholderia thailandensis (strain ATCC 700388 / DSM 13276 / CCUG 48851 / CIP 106301 / E264) protein is Formamidopyrimidine-DNA glycosylase.